The following is a 633-amino-acid chain: Glutamyl-tRNA(Gln) amidotransferase subunit E (633 aa).

The protein belongs to the GatB/GatE family. GatE subfamily. In terms of assembly, heterodimer of GatD and GatE.

It carries out the reaction L-glutamyl-tRNA(Gln) + L-glutamine + ATP + H2O = L-glutaminyl-tRNA(Gln) + L-glutamate + ADP + phosphate + H(+). Allows the formation of correctly charged Gln-tRNA(Gln) through the transamidation of misacylated Glu-tRNA(Gln) in organisms which lack glutaminyl-tRNA synthetase. The reaction takes place in the presence of glutamine and ATP through an activated gamma-phospho-Glu-tRNA(Gln). The GatDE system is specific for glutamate and does not act on aspartate. The sequence is that of Glutamyl-tRNA(Gln) amidotransferase subunit E from Methanococcus vannielii (strain ATCC 35089 / DSM 1224 / JCM 13029 / OCM 148 / SB).